The sequence spans 453 residues: Protein amnionless (453 aa).

The first 19 residues, 1-19 (MGVLGRVLLWLQLCALTQA), serve as a signal peptide directing secretion. The Extracellular segment spans residues 20 to 357 (VSKLWVPNTD…ESGAHVWGSS (338 aa)). Residue N35 is glycosylated (N-linked (GlcNAc...) asparagine). 6 disulfide bridges follow: C43–C96, C137–C213, C205–C211, C223–C249, C234–C250, and C239–C253. The interaction with CUBN stretch occupies residues 67–87 (SDMLLPLDGELVLASGAGFGV). The 53-residue stretch at 202–254 (PEDCADPSGCVCGNAEAQPWICAALLQPLGGRCPQAACHSALRPQGQCCDLCG) folds into the VWFC domain. The chain crosses the membrane as a helical span at residues 358-378 (AAGLAGGVAAAVLLALLVLLV). The Cytoplasmic portion of the chain corresponds to 379–453 (APPLLRRAGR…PLFAGAEAEA (75 aa)).

Interacts (via extracellular region) with CUBN/cubilin, giving rise to a huge complex containing one AMN chain and three CUBN chains. Post-translationally, N-glycosylated. In terms of processing, a soluble form arises by proteolytic removal of the membrane anchor. As to expression, detected in proximal tubules in the kidney cortex (at protein level). Long isoforms are highly expressed in small intestine, colon and kidney (renal proximal tubule epithelial cells). Shorter isoforms are detected at lower levels in testis, thymus and peripheral blood leukocytes.

It localises to the apical cell membrane. It is found in the cell membrane. The protein resides in the endosome membrane. Its subcellular location is the membrane. The protein localises to the coated pit. It localises to the secreted. Membrane-bound component of the endocytic receptor formed by AMN and CUBN. Required for normal CUBN glycosylation and trafficking to the cell surface. The complex formed by AMN and CUBN is required for efficient absorption of vitamin B12. Required for normal CUBN-mediated protein transport in the kidney. This chain is Protein amnionless (AMN), found in Homo sapiens (Human).